A 220-amino-acid chain; its full sequence is Large ribosomal subunit protein uL3 (220 aa).

Positions 127 to 155 (FQGAIKRHGQSRGPMSHSSHFHRAPDSVG) are disordered.

This sequence belongs to the universal ribosomal protein uL3 family. Part of the 50S ribosomal subunit. Forms a cluster with proteins L14 and L19.

In terms of biological role, one of the primary rRNA binding proteins, it binds directly near the 3'-end of the 23S rRNA, where it nucleates assembly of the 50S subunit. This Staphylococcus aureus (strain JH9) protein is Large ribosomal subunit protein uL3.